Here is a 212-residue protein sequence, read N- to C-terminus: MNSRLIVTGTDTGIGKTVFSAALCHALGAVYWKPVQSGLEEETDSEIVARLAQASPQRILPEAWRLNTPASPHLSARLDGVEIRPEEMHIPATSLPLVIEGAGGLLVPLNDKTLFADLFAIWRIPAILCARAALGTINHTLLSLEAMRSRDIPVLGVAFIGEANEDTETTIAHLGRVKRLGRLPLLDDLSPEKLHHSFARNFHIDDFAGVAR.

ATP is bound at residue 13–18; it reads GIGKTV. Threonine 17 is a Mg(2+) binding site. Residue lysine 33 is part of the active site. Serine 37 contacts substrate. Glutamate 100 serves as a coordination point for Mg(2+). Residues 100–103 and 184–186 each bind ATP; these read EGAG and PLL.

It belongs to the dethiobiotin synthetase family. As to quaternary structure, homodimer. Requires Mg(2+) as cofactor.

It is found in the cytoplasm. The catalysed reaction is (7R,8S)-7,8-diammoniononanoate + CO2 + ATP = (4R,5S)-dethiobiotin + ADP + phosphate + 3 H(+). Its pathway is cofactor biosynthesis; biotin biosynthesis; biotin from 7,8-diaminononanoate: step 1/2. Its function is as follows. Catalyzes a mechanistically unusual reaction, the ATP-dependent insertion of CO2 between the N7 and N8 nitrogen atoms of 7,8-diaminopelargonic acid (DAPA, also called 7,8-diammoniononanoate) to form a ureido ring. This chain is ATP-dependent dethiobiotin synthetase BioD, found in Brucella melitensis biotype 2 (strain ATCC 23457).